The sequence spans 64 residues: Large ribosomal subunit protein uL29 (64 aa).

The protein belongs to the universal ribosomal protein uL29 family.

This chain is Large ribosomal subunit protein uL29, found in Coprothermobacter proteolyticus (strain ATCC 35245 / DSM 5265 / OCM 4 / BT).